A 41-amino-acid polypeptide reads, in one-letter code: Large ribosomal subunit protein bL36 (41 aa).

It belongs to the bacterial ribosomal protein bL36 family.

This is Large ribosomal subunit protein bL36 (rpmJ) from Agrobacterium fabrum (strain C58 / ATCC 33970) (Agrobacterium tumefaciens (strain C58)).